The primary structure comprises 775 residues: Ubiquitin carboxyl-terminal hydrolase 14 (775 aa).

The UBP-type 1; degenerate zinc finger occupies 1–108 (MSCPHLTETN…EDLYDYFYVP (108 aa)). Residues Cys25, Cys28, Cys41, Cys44, Cys49, His56, His60, His66, Cys153, His155, Cys174, Cys177, Cys186, Cys189, Cys194, His207, His211, His217, Cys236, and Cys239 each coordinate Zn(2+). The UBP-type 2 zinc finger occupies 151–259 (TTCDHIINLP…THMLNFGIDI (109 aa)). The region spanning 300–774 (TGLKNLGNSC…TGYVYLFERL (475 aa)) is the USP domain. The active-site Nucleophile is Cys309. At Ser456 the chain carries Phosphoserine. UBA domains are found at residues 576–617 (EWNQ…LFEH) and 639–679 (SVSE…ILNH). Catalysis depends on His730, which acts as the Proton acceptor.

This sequence belongs to the peptidase C19 family.

The catalysed reaction is Thiol-dependent hydrolysis of ester, thioester, amide, peptide and isopeptide bonds formed by the C-terminal Gly of ubiquitin (a 76-residue protein attached to proteins as an intracellular targeting signal).. The polypeptide is Ubiquitin carboxyl-terminal hydrolase 14 (ubp14) (Schizosaccharomyces pombe (strain 972 / ATCC 24843) (Fission yeast)).